Reading from the N-terminus, the 716-residue chain is Zinc finger protein on ecdysone puffs (716 aa).

Disordered regions lie at residues 103–168 (PSLL…GGIR) and 182–208 (KNAN…ESPY). Positions 188-203 (KKKEPTPGEKKIESPT) are enriched in basic and acidic residues. Ser-201 carries the phosphoserine modification. Residue Thr-203 is modified to Phosphothreonine. Ser-206 carries the phosphoserine modification. A C2H2-type 1 zinc finger spans residues 216–240 (FYCHLCKKHMWDANSFENHIKGRTH). A C2H2-type 2; atypical zinc finger spans residues 288–310 (DYCTMCDLNFHGHISTHRKSEGH). The C2H2-type 3 zinc finger occupies 319 to 343 (PKCIECNKEFATRIDYDTHLLSAEH). Basic and acidic residues predominate over residues 350 to 359 (NNTKVGERKR). The tract at residues 350–447 (NNTKVGERKR…EEEEVALPVD (98 aa)) is disordered. Residues 379-383 (KRKKK) carry the Nuclear localization signal motif. Residues 386 to 401 (KKEGEAADGEAKKEGA) are compositionally biased toward basic and acidic residues. Residues 405–414 (EGAEGDEAEG) are compositionally biased toward acidic residues. Residues 415 to 431 (EEAKEGEEAADETKEGD) show a composition bias toward basic and acidic residues. Positions 432 to 447 (ELNESQEEEEVALPVD) are enriched in acidic residues. Residues 489-513 (YECSVCSKFFDTEVTAEIHSRTATH) form a C2H2-type 4 zinc finger. The disordered stretch occupies residues 534–716 (RAAAALEENE…QRARGRYNRY (183 aa)). Over residues 541 to 551 (ENERKKRKVEE) the composition is skewed to basic and acidic residues. The Nuclear localization signal signature appears at 544–548 (RKKRK). A compositionally biased stretch (acidic residues) spans 560 to 638 (AAEETTEGAE…GQEGEQEPEP (79 aa)). Residues 639–656 (EPAPVQTPAPAEPAPPAK) show a composition bias toward pro residues. Residues 657–704 (TPAKTPTKAAAPAAVASPAAAATSADASPSPAKKATPARAAAGAKATP) show a composition bias toward low complexity. A phosphoserine mark is found at Ser-673, Ser-684, and Ser-686. The residue at position 692 (Thr-692) is a Phosphothreonine. Residues 707–716 (QRARGRYNRY) are compositionally biased toward basic residues.

The protein resides in the nucleus. The protein localises to the chromosome. In terms of biological role, may play a role in the process of early and late gene activation, or possibly in RNA processing, for a defined set of developmentally regulated loci. The protein is Zinc finger protein on ecdysone puffs (Pep) of Drosophila melanogaster (Fruit fly).